Consider the following 277-residue polypeptide: Inositol monophosphatase 1 (277 aa).

Mg(2+) contacts are provided by Glu70, Asp90, Ile92, and Asp93. Glu70 contacts substrate. Substrate is bound at residue 92-95 (IDGT). The residue at position 168 (Thr168) is a Phosphothreonine. Substrate contacts are provided by residues 194–196 (GTA), Glu213, and Asp220. Asp220 lines the Mg(2+) pocket.

Belongs to the inositol monophosphatase superfamily. In terms of assembly, homodimer. Mg(2+) serves as cofactor.

The protein localises to the cytoplasm. It catalyses the reaction a myo-inositol phosphate + H2O = myo-inositol + phosphate. It carries out the reaction 1D-myo-inositol 1-phosphate + H2O = myo-inositol + phosphate. The catalysed reaction is 1D-myo-inositol 2-phosphate + H2O = myo-inositol + phosphate. The enzyme catalyses 1D-myo-inositol 3-phosphate + H2O = myo-inositol + phosphate. It catalyses the reaction 1D-myo-inositol 4-phosphate + H2O = myo-inositol + phosphate. It carries out the reaction 1D-myo-inositol 5-phosphate + H2O = myo-inositol + phosphate. The catalysed reaction is 1D-myo-inositol 6-phosphate + H2O = myo-inositol + phosphate. The enzyme catalyses scyllo-inositol 1-phosphate + H2O = scyllo-inositol + phosphate. It catalyses the reaction alpha-D-galactose 1-phosphate + H2O = D-galactose + phosphate. It carries out the reaction alpha-D-glucose 1-phosphate + H2O = D-glucose + phosphate. The catalysed reaction is D-glucose 6-phosphate + H2O = D-glucose + phosphate. The enzyme catalyses beta-D-fructose 1-phosphate + H2O = D-fructose + phosphate. It catalyses the reaction glycerol 2-phosphate + H2O = glycerol + phosphate. It carries out the reaction adenosine 2'-phosphate + H2O = adenosine + phosphate. Its pathway is polyol metabolism; myo-inositol biosynthesis; myo-inositol from D-glucose 6-phosphate: step 2/2. Inhibited by Li(+), Ca(2+) and Mn(2+), but also by Mg(2+) at concentrations above 3 mM. Phosphatase involved in the dephosphorylation of myo-inositol monophosphate to generate myo-inositol. Is also able to dephosphorylate scyllo-inositol-phosphate, myo-inositol 1,4-diphosphate, scyllo-inositol-1,3-diphosphate and scyllo-inositol-1,4-diphosphate. Also dephosphorylates in vitro other sugar-phosphates including D-galactose-1-phosphate, glucose-1-phosphate, glucose-6-phosphate, fructose-1-phosphate, beta-glycerophosphate and 2'-AMP. Responsible for the provision of inositol required for synthesis of phosphatidylinositol and polyphosphoinositides, and involved in maintaining normal brain function. Has been implicated as the pharmacological target for lithium Li(+) action in brain. The polypeptide is Inositol monophosphatase 1 (IMPA1) (Pongo abelii (Sumatran orangutan)).